A 220-amino-acid polypeptide reads, in one-letter code: UPF0711 protein C18orf21 (220 aa).

The tract at residues 117–181 (SRSFVSTLKS…VSTCSSKNTS (65 aa)) is disordered. Residues 119–136 (SFVSTLKSNPATPTSKLS) show a composition bias toward polar residues. Position 126 is a phosphoserine (S126). A phosphothreonine mark is found at T130 and T139. The span at 171–180 (SVSTCSSKNT) shows a compositional bias: low complexity.

Belongs to the UPF0711 family.

In Homo sapiens (Human), this protein is UPF0711 protein C18orf21 (C18orf21).